A 440-amino-acid polypeptide reads, in one-letter code: 23S rRNA (uracil(1939)-C(5))-methyltransferase RlmD (440 aa).

The region spanning 10–68 is the TRAM domain; that stretch reads KSTQPQRIEFTVDSLDHHCVGIGRHQGKAIFIEGALPGELVKARILEDKKQYAHAALQQ. Positions 81, 87, 90, and 169 each coordinate [4Fe-4S] cluster. S-adenosyl-L-methionine contacts are provided by glutamine 273, phenylalanine 302, asparagine 307, glutamate 323, aspartate 350, and aspartate 371. Cysteine 397 (nucleophile) is an active-site residue.

Belongs to the class I-like SAM-binding methyltransferase superfamily. RNA M5U methyltransferase family. RlmD subfamily.

The catalysed reaction is uridine(1939) in 23S rRNA + S-adenosyl-L-methionine = 5-methyluridine(1939) in 23S rRNA + S-adenosyl-L-homocysteine + H(+). Its function is as follows. Catalyzes the formation of 5-methyl-uridine at position 1939 (m5U1939) in 23S rRNA. The polypeptide is 23S rRNA (uracil(1939)-C(5))-methyltransferase RlmD (Aeromonas hydrophila subsp. hydrophila (strain ATCC 7966 / DSM 30187 / BCRC 13018 / CCUG 14551 / JCM 1027 / KCTC 2358 / NCIMB 9240 / NCTC 8049)).